The primary structure comprises 201 residues: Recombination protein RecR (201 aa).

The C4-type zinc-finger motif lies at 60–75 (CSECGNMDVSDPCTVC). In terms of domain architecture, Toprim spans 83 to 178 (AAICVVETVG…SITSLARGVP (96 aa)).

It belongs to the RecR family.

Its function is as follows. May play a role in DNA repair. It seems to be involved in an RecBC-independent recombinational process of DNA repair. It may act with RecF and RecO. The chain is Recombination protein RecR from Maricaulis maris (strain MCS10) (Caulobacter maris).